Reading from the N-terminus, the 457-residue chain is Probable ECA polymerase (457 aa).

A run of 11 helical transmembrane segments spans residues 3–23, 41–61, 65–85, 118–138, 154–174, 181–201, 206–226, 227–247, 340–360, 377–397, and 408–428; these read LLQF…ILTL, MLFL…VFGF, VVPA…YAIY, IMAL…GFLL, GVAL…VYFL, WLLF…IVGG, IIIA…ITLW, MLAL…LKRY, LVVM…GLII, YKAA…IVLA, and VVFF…LYWL.

It belongs to the WzyE family. In terms of assembly, probably part of a complex composed of WzxE, WzyE and WzzE.

Its subcellular location is the cell inner membrane. It participates in bacterial outer membrane biogenesis; enterobacterial common antigen biosynthesis. In terms of biological role, probably involved in the polymerization of enterobacterial common antigen (ECA) trisaccharide repeat units. This chain is Probable ECA polymerase, found in Erwinia tasmaniensis (strain DSM 17950 / CFBP 7177 / CIP 109463 / NCPPB 4357 / Et1/99).